The following is a 275-amino-acid chain: Large ribosomal subunit protein uL2 (275 aa).

Basic and acidic residues predominate over residues 28–38 (EPYAPLLDKKS). Disordered regions lie at residues 28–55 (EPYAPLLDKKSKSGGRNNTGRITTRHVG) and 224–258 (AMNPVDHPHGGGEGRTSGGRHPVSPWGIPTKGYKT).

The protein belongs to the universal ribosomal protein uL2 family. Part of the 50S ribosomal subunit. Forms a bridge to the 30S subunit in the 70S ribosome.

Functionally, one of the primary rRNA binding proteins. Required for association of the 30S and 50S subunits to form the 70S ribosome, for tRNA binding and peptide bond formation. It has been suggested to have peptidyltransferase activity; this is somewhat controversial. Makes several contacts with the 16S rRNA in the 70S ribosome. The sequence is that of Large ribosomal subunit protein uL2 from Cellvibrio japonicus (strain Ueda107) (Pseudomonas fluorescens subsp. cellulosa).